A 279-amino-acid polypeptide reads, in one-letter code: Urease accessory protein UreD (279 aa).

This sequence belongs to the UreD family. UreD, UreF and UreG form a complex that acts as a GTP-hydrolysis-dependent molecular chaperone, activating the urease apoprotein by helping to assemble the nickel containing metallocenter of UreC. The UreE protein probably delivers the nickel.

The protein localises to the cytoplasm. Its function is as follows. Required for maturation of urease via the functional incorporation of the urease nickel metallocenter. The polypeptide is Urease accessory protein UreD (Nostoc punctiforme (strain ATCC 29133 / PCC 73102)).